We begin with the raw amino-acid sequence, 1305 residues long: MDSLQRLNGLLTLVLSALWHLGLTASNYNCDDPLASFFSPMTFSSSLDLTGSYSSAQLNWKMGTGGWSPVDSNAQQWLQIDLGNRVEITAVATQGRYGSSDWVTSYRLMFSDTGHNWQHYTQEDSIWTFVGNMNADSVVHHRLLHSMRARFVRFVPLEWNPNGKIGMRVEAYGCSYRSDVADFDGRSTLLYRFNQKTMSTLKDVISLKFKSMQGDGVLFHGEGQRGDHVTLELQKGRLALYLNLDDSKARLSSTVPLVIMGSLLDDQHWHSVLLERVGKQANFTVDMNTQHFQTKGETDALDIDYELSFGGIPVPSKPGTFVKKNFHGCMENLYYNGVNIIDLAKRRKHQIYSGNVTFSCSEPQIVPITFVNSRSSYLMLPGTPQIDGLSVSFQFRTWNEDGLLLSTELSEGSGTLLLILEGGTLRLLIKKVAGHGTEIKTGSGLNDGLWHSVSINARRNRVTLTLDNDAASPAPETSRKQIYSGKSYYFGGCPDNLTDSQCLNPIKAFQGCMRLIFIDNQPKDLISVQQGSLGNFSDLHIDLCSIKDRCLPNYCEHGGHCAQTWTTFYCNCSDTGYTGATCHDSIYEQSCEVYRHKGHTAGFFYVDSDGSGPLGPLQVYCNITEDKIWMTVQHNNTELTRVQGSSPEKPYSMTLNYGGSMEQLEALIDGSEYCEQELKYHCRRSRLLNTLDGTPFTWWIGRSNERHPYWEGSVPGVQQCGCGLEESCLDNAYFCNCDADMDEWSNNTGLFSLKDHLPVTHVIITDTNRSNSEAAWRIGPLRCNGDRHFWNAVSFSTEASYLHFPTFHAEFSADISFFFKTTALSGVFLENLGIKDFLRLEMSSPSEVTFTIDVGNGPVELLVQSPYPLNDNQWHYIRAERNVKETSLQVDNLPLSLREASEEAYFRLHLTSQLFVGGTSSRQKGFLGCMRSLHLNGQNTDLIERAKLMSGVTPGCPGHCSSYSSNCHNGGKCVEKQSGYSCDCTNSPNEGPFCQKEISALFDPGTSVTYMFQEPYLVIKNTSLLSSPIYTDTARSKETIMLNFLTAQAPTILLYLNFSSQKFLAILLSSNGSLQIRFRLSKGESHVYTMSTENLANGRVHQVKISKDGPEISIQMDQQLFSYNFSTKVEFWTLKSLVLGKVTETLGLDPEVAKVNILGFLGCLSSVQYNHIAPLKAALRHAGVAPVTVHGTLTESGCDSTLDSDVNAVTTVHSSLEPIGKRDEQEPLTNTVQSDSAVIGGIIAVVTFVTFCVIGIMICFLYQHKQSHRTNQTKEKEYPETLSNSFRNVIDLQNTASECKREYFI.

The N-terminal stretch at 1–24 is a signal peptide; sequence MDSLQRLNGLLTLVLSALWHLGLT. The F5/8 type C domain occupies 25–174; that stretch reads ASNYNCDDPL…IGMRVEAYGC (150 aa). Laminin G-like domains lie at 180–360 and 367–544; these read VADF…TFSC and PITF…IDLC. The N-linked (GlcNAc...) asparagine glycan is linked to Asn282. A disulfide bridge connects residues Cys329 and Cys360. Residue Asn496 is glycosylated (N-linked (GlcNAc...) asparagine). Cystine bridges form between Cys512–Cys544, Cys550–Cys561, and Cys555–Cys570. The EGF-like 1 domain occupies 546 to 583; the sequence is IKDRCLPNYCEHGGHCAQTWTTFYCNCSDTGYTGATCH. A glycan (N-linked (GlcNAc...) asparagine) is linked at Asn571. A disulfide bridge connects residues Cys572 and Cys582. The Fibrinogen C-terminal domain maps to 584-790; sequence DSIYEQSCEV…LRCNGDRHFW (207 aa). Residue Asn622 is glycosylated (N-linked (GlcNAc...) asparagine). Residues 791 to 956 form the Laminin G-like 3 domain; sequence NAVSFSTEAS…KLMSGVTPGC (166 aa). 4 disulfide bridges follow: Cys929–Cys956, Cys960–Cys973, Cys967–Cys982, and Cys984–Cys994. The EGF-like 2 domain maps to 957-995; it reads PGHCSSYSSNCHNGGKCVEKQSGYSCDCTNSPNEGPFCQ. One can recognise a Laminin G-like 4 domain in the interval 1014 to 1198; that stretch reads EPYLVIKNTS…VHGTLTESGC (185 aa). Asn1057 carries an N-linked (GlcNAc...) asparagine glycan. Cys1163 and Cys1198 form a disulfide bridge. The chain crosses the membrane as a helical span at residues 1238–1258; it reads VIGGIIAVVTFVTFCVIGIMI.

It belongs to the neurexin family.

It is found in the membrane. Its function is as follows. May play a role in the correct development and proper functioning of the peripheral and central nervous system and be involved in cell adhesion and intercellular communication. The sequence is that of Contactin-associated protein like 5-1 (Cntnap5a) from Rattus norvegicus (Rat).